A 1079-amino-acid polypeptide reads, in one-letter code: Electrogenic sodium bicarbonate cotransporter 1 (1079 aa).

Residues 1–62 (MEDEAVLDRG…EKKEKERISE (62 aa)) form a required for interaction with AHCYL1 region. The Cytoplasmic segment spans residues 1-466 (MEDEAVLDRG…FASDFYDALN (466 aa)). Residue E21 is modified to Phosphoserine. The residue at position 30 (Y30) is a Phosphotyrosine. Basic residues predominate over residues 39–52 (YRRRRRHKRKAGHK). Residues 39–78 (YRRRRRHKRKAGHKEKKEKERISENYSDKSDVENADESSS) form a disordered region. Over residues 53-70 (EKKEKERISENYSDKSDV) the composition is skewed to basic and acidic residues. 7 positions are modified to phosphoserine: S61, S65, S68, S223, S232, S233, and S245. Positions 235-266 (SRMFSNPDNGSPAMTHRNLTSSSLNDISDKPE) are disordered. Phosphothreonine is present on residues T249 and T254. Residues 251–260 (RNLTSSSLND) are compositionally biased toward polar residues. Phosphoserine is present on residues S256, S257, and S262. The chain crosses the membrane as a helical span at residues 467-491 (IQALSAILFIYLATVTNAITFGGLL). Residues 492–501 (GDATDNMQGV) are Extracellular-facing. The helical transmembrane segment at 502-520 (LESFLGTAVSGAIFCLFAG) threads the bilayer. A topological domain (cytoplasmic) is located at residue Q521. The chain crosses the membrane as a discontinuously helical span at residues 522–542 (PLTILSSTGPVLVFERLLFNF). Residues 543 to 550 (SKDHNFDY) are Extracellular-facing. A helical membrane pass occupies residues 551-571 (LEFRLWIGLWSAFMCLVLVAT). Topologically, residues 572-585 (DASFLVQYFTRFTE) are cytoplasmic. A helical membrane pass occupies residues 586–609 (EGFSSLISFIFIYDAFKKMIKLAD). Residues 610 to 692 (YYPINSDFKV…GNNCDFVPDI (83 aa)) are Extracellular-facing. The helical transmembrane segment at 693–710 (TLMSFILFLGTYTSSMAM) threads the bilayer. Residues 711-725 (KKFKTSRYFPTTARK) are Cytoplasmic-facing. A helical transmembrane segment spans residues 726 to 745 (LISDFAIILSILIFCVIDAL). Topologically, residues 746-779 (VGVDTPKLIVPSEFKPTSPNRGWFVPPFGGNPWW) are extracellular. Residues 748–779 (VDTPKLIVPSEFKPTSPNRGWFVPPFGGNPWW) form an interaction with CA4 region. A helical transmembrane segment spans residues 780 to 807 (VCLAAAIPALLVTILIFMDQQITAVIVN). The Cytoplasmic segment spans residues 808–819 (RKEHKLKKGAGY). A helical membrane pass occupies residues 820–836 (HLDLFWVAILMVVCSFM). Residue A837 is a topological domain, extracellular. A discontinuously helical transmembrane segment spans residues 838–855 (LPWYVAATVISIAHIDSL). The Cytoplasmic segment spans residues 856 to 877 (KMETETSAPGEQPKFLGVREQR). Residues 878–894 (VTGTLVFILTGLSVFMA) traverse the membrane as a helical segment. The Extracellular segment spans residues 895–901 (PILKFIP). The helical transmembrane segment at 902–918 (MPVLYGVFLYMGVASLN) threads the bilayer. At 919–960 (GVQFMDRLKLLLMPLKHQPDFIYLRHVPLRRVHLFTFLQVLC) the chain is on the cytoplasmic side. The segment at residues 961–986 (LALLWILKSTVAAIIFPVMILALVAV) is an intramembrane region (discontinuously helical). Residues 987–1079 (RKGMDYLFSQ…STFLERHTSC (93 aa)) are Cytoplasmic-facing. Positions 1002–1004 (LDD) are CA2-binding. Residues 1012-1079 (KKKEDEKKKK…STFLERHTSC (68 aa)) form a disordered region. 2 positions are modified to phosphoserine: S1026 and S1029. The tract at residues 1030 to 1033 (DNDD) is CA2-binding. Phosphoserine occurs at positions 1034 and 1044. The interval 1057 to 1059 (FLS) is required for basolateral targeting. The segment covering 1062–1079 (KPLDRERSSTFLERHTSC) has biased composition (basic and acidic residues). S1069 bears the Phosphoserine mark.

Belongs to the anion exchanger (TC 2.A.31) family. Homodimer. Interacts with CA2/carbonic anhydrase 2 and CA4/carbonic anhydrase 4 which may regulate transporter activity. Isoform 1 but not isoform 2 interacts with AHCYL1 (via PEST domain when phosphorylated); the interaction increases SLC4A4 isoform 1 activity. Interacts with AHCYL2. Phosphorylation of Ser-1026 by PKA increases the binding of CA2 and changes the Na(+):HCO3(-) stoichiometry of the transporter from 3:1 to 2:1. Phosphorylated in presence of STK39 and dephosphorylated in presence of PP1 phosphatase; phosphorylation seems to inhibit SLC4A4 activity. Post-translationally, N-glycosylated. May not be necessary for the transporter basic functions. As to expression, isoform 1 is specifically expressed in pancreatic ducts and acini. Also expressed in parotid acinar cells and in the colonic crypts.

It localises to the basolateral cell membrane. The protein resides in the cell membrane. The enzyme catalyses 2 hydrogencarbonate(out) + Na(+)(out) = 2 hydrogencarbonate(in) + Na(+)(in). It carries out the reaction 3 hydrogencarbonate(out) + Na(+)(out) = 3 hydrogencarbonate(in) + Na(+)(in). Its activity is regulated as follows. Activated by cyclic AMP. In terms of biological role, electrogenic sodium/bicarbonate cotransporter with a Na(+):HCO3(-) stoichiometry varying from 1:2 to 1:3. May regulate bicarbonate influx/efflux at the basolateral membrane of cells and regulate intracellular pH. The sequence is that of Electrogenic sodium bicarbonate cotransporter 1 (Slc4a4) from Mus musculus (Mouse).